The primary structure comprises 286 residues: Polyamine aminopropyltransferase (286 aa).

One can recognise a PABS domain in the interval 5 to 238 (KIWHEKLHRH…GTMMFSWGTD (234 aa)). H64 and D88 together coordinate spermidine. S-methyl-5'-thioadenosine contacts are provided by residues E108 and 140 to 141 (NG). D158 functions as the Proton acceptor in the catalytic mechanism. 158 to 161 (DSTD) contributes to the spermidine binding site.

This sequence belongs to the spermidine/spermine synthase family. As to quaternary structure, homodimer or homotetramer.

It localises to the cytoplasm. The catalysed reaction is S-adenosyl 3-(methylsulfanyl)propylamine + putrescine = S-methyl-5'-thioadenosine + spermidine + H(+). The protein operates within amine and polyamine biosynthesis; spermidine biosynthesis; spermidine from putrescine: step 1/1. Its function is as follows. Catalyzes the irreversible transfer of a propylamine group from the amino donor S-adenosylmethioninamine (decarboxy-AdoMet) to putrescine (1,4-diaminobutane) to yield spermidine. The polypeptide is Polyamine aminopropyltransferase (Buchnera aphidicola subsp. Schizaphis graminum (strain Sg)).